Reading from the N-terminus, the 1062-residue chain is SLIT-ROBO Rho GTPase-activating protein 1 (1062 aa).

One can recognise an F-BAR domain in the interval 19-314 (SQVKEIRAQL…AVDNLEPRSD (296 aa)). The stretch at 352–382 (QAELMLRNQQLQSRLATLKIESEEVKKTTEA) forms a coiled coil. S416 carries the phosphoserine modification. Positions 481 to 671 (GRRNSHARHQ…TIIIHHETIF (191 aa)) constitute a Rho-GAP domain. The region spanning 720-779 (CEPIEAIAKFDYVGRSARELSFKKGASLLLYHRASEDWWEGRHNGIDGLVPHQYIVVQDM) is the SH3 domain. A compositionally biased stretch (polar residues) spans 785–799 (DTLSQKADSEASSGP). A disordered region spans residues 785 to 931 (DTLSQKADSE…TGFNDHKPLD (147 aa)). Residues S812 and S894 each carry the phosphoserine modification. The segment covering 899 to 908 (SRHDSLKKID) has biased composition (basic and acidic residues). S909 carries the post-translational modification Phosphoserine. A compositionally biased stretch (polar residues) spans 914–923 (RSTSSGQYTG). The stretch at 933 to 960 (ETIAQDIEETMNTALNELRELERQSTVK) forms a coiled coil. Residues 974–988 (KNSPTPATSTESLSP) are compositionally biased toward polar residues. Disordered regions lie at residues 974–1013 (KNSP…ETMS) and 1028–1062 (KPPA…SCTM). Phosphoserine is present on S976. Phosphothreonine is present on T978. The span at 1004–1013 (STSSSSETMS) shows a compositional bias: low complexity. A Phosphoserine modification is found at S1009. The span at 1053–1062 (QGPTDKSCTM) shows a compositional bias: polar residues.

Homodimer. Forms a heterooligomer with SRGAP2 and SRGAP3 through its F-BAR domain. Interacts with CDC42 and RHOA. Interacts with FASLG. Interacts (via SH3 domain) with ROBO1.

Its function is as follows. GTPase-activating protein for RhoA and Cdc42 small GTPases. Together with CDC42 seems to be involved in the pathway mediating the repulsive signaling of Robo and Slit proteins in neuronal migration. SLIT2, probably through interaction with ROBO1, increases the interaction of SRGAP1 with ROBO1 and inactivates CDC42. This Mus musculus (Mouse) protein is SLIT-ROBO Rho GTPase-activating protein 1 (Srgap1).